Here is a 1025-residue protein sequence, read N- to C-terminus: Exocyst complex component 6 (1025 aa).

Composition is skewed to basic and acidic residues over residues 1-10 (MSNKKQKEEI) and 22-52 (MVRD…ENVK). 3 disordered regions span residues 1 to 122 (MSNK…TRHL), 135 to 154 (LSSQ…DQAK), and 666 to 691 (QFGD…DENE). Residues 19-68 (LKTMVRDKDKEQKEEKREKKEKKRLEKKEAENVKKEKKKEKKELKKIGKA) adopt a coiled-coil conformation. The segment covering 71-93 (SGSITSDSSTHSGAQEFDSYGND) has biased composition (low complexity). The segment covering 104 to 118 (SIDSNGLSSSGQPMQ) has biased composition (polar residues). 2 stretches are compositionally biased toward low complexity: residues 135–147 (LSSQ…LPHS) and 666–677 (QFGDKNLNNNNN). A compositionally biased stretch (acidic residues) spans 678–691 (NDDDDDYFDEDENE).

It belongs to the SEC15 family. In terms of assembly, the exocyst complex is composed of sec3/exoc1, sec5/exoc2, sec6/exoc3, sec8/exoc4, sec10/exoc5, sec15/exoc6, exo70/exoc7 and exo84/exoc8.

The protein localises to the cytoplasm. It is found in the perinuclear region. Its subcellular location is the midbody. It localises to the midbody ring. Functionally, component of the exocyst complex involved in the docking of exocytic vesicles with fusion sites on the plasma membrane. The polypeptide is Exocyst complex component 6 (exoc6) (Dictyostelium discoideum (Social amoeba)).